The following is a 426-amino-acid chain: Glutamate-1-semialdehyde 2,1-aminomutase (426 aa).

N6-(pyridoxal phosphate)lysine is present on K265.

Belongs to the class-III pyridoxal-phosphate-dependent aminotransferase family. HemL subfamily. As to quaternary structure, homodimer. It depends on pyridoxal 5'-phosphate as a cofactor.

It is found in the cytoplasm. The enzyme catalyses (S)-4-amino-5-oxopentanoate = 5-aminolevulinate. It participates in porphyrin-containing compound metabolism; protoporphyrin-IX biosynthesis; 5-aminolevulinate from L-glutamyl-tRNA(Glu): step 2/2. The polypeptide is Glutamate-1-semialdehyde 2,1-aminomutase (Salmonella gallinarum (strain 287/91 / NCTC 13346)).